The chain runs to 338 residues: MSTLRLLISDSYDPWFNLAVEECIFRQMPATQRVLFLWRNADTVVIGRAQNPWKECNTRRMEEDNVRLARRSSGGGAVFHDLGNTCFTFMAGKPEYDKTISTSIVLNALNALGVSAEASGRNDLVVKTAEGDRKVSGSAYRETKDRGFHHGTLLLNADLSRLANYLNPDKKKLAAKGITSVRSRVTNLTELLPGITHEQVCEAITKAFFAHYGERVEAEIISPDKTPDLPNFAETFARQSSWEWNFGQAPAFSHLLDERFSWGGVELHFDVEKGHITRAQVFTDSLNPAPLEALAGRLQGGLYRADMLQQECEALLVDFPDQEKELRELSTWIAGAVR.

The BPL/LPL catalytic domain occupies 29-216 (PATQRVLFLW…AFFAHYGERV (188 aa)). ATP contacts are provided by residues Arg71, 76 to 79 (GAVF), and Lys134. Lys134 lines the (R)-lipoate pocket.

Belongs to the LplA family. In terms of assembly, monomer.

Its subcellular location is the cytoplasm. The enzyme catalyses L-lysyl-[lipoyl-carrier protein] + (R)-lipoate + ATP = N(6)-[(R)-lipoyl]-L-lysyl-[lipoyl-carrier protein] + AMP + diphosphate + H(+). Its pathway is protein modification; protein lipoylation via exogenous pathway; protein N(6)-(lipoyl)lysine from lipoate: step 1/2. The protein operates within protein modification; protein lipoylation via exogenous pathway; protein N(6)-(lipoyl)lysine from lipoate: step 2/2. Catalyzes both the ATP-dependent activation of exogenously supplied lipoate to lipoyl-AMP and the transfer of the activated lipoyl onto the lipoyl domains of lipoate-dependent enzymes. This is Lipoate-protein ligase A from Escherichia coli O139:H28 (strain E24377A / ETEC).